Here is a 442-residue protein sequence, read N- to C-terminus: Putative amino acid transporter YuiF (442 aa).

The next 11 helical transmembrane spans lie at 21–41 (IVIALIIGALAGGLTGGLGLG), 51–71 (LGGNATVAVSYAMLGAFAAAL), 103–123 (LIVLIILIVSCFSQNVVPVHI), 146–166 (LIACVITFGLTAPYILLPVGF), 190–210 (IPYALIIPVAGMVVGLILSVI), 236–256 (IGIAVLAIVVSLGVQLYLSQT), 259–279 (VEGMIMGALAGLIVLFVSGVM), 292–312 (MVLMAFIGFVMLVAAGFSNVL), 335–355 (LGALLMLIVGLLITMGIGSSF), 364–384 (IFVPLCMQLGFSPMATIAIIG), and 421–441 (VPTFIFYNIPLVIFGWIAALV).

The protein resides in the cell membrane. The protein is Putative amino acid transporter YuiF (yuiF) of Bacillus subtilis (strain 168).